The sequence spans 3996 residues: MPANHLPIGSTMSTVHLSSDGTYFYWIWSPASLNEKTPKGHSVFMDIFELVVENGVFVANPLQERTILMRKEGESAKSINEMLLSRLSRYRASPSATLAALTGSTISNTLKEDQAANTSCGLPLKMLRKTPIYTCGTYLVMLVPPPGGSGSSATRSLFGGTSGLSSLKRACYDTVNNMLWTCSNDYIDQWCNPGNQAFHYVCQRLGVSHIITEPKEEAITTNEVINQLLHHVGAMCIHQLNLLATNPNLPITSVLGKQHPIEAHHLSSICDIMEKAMVNGDTCIIRCILVVFQVVFKFFFSPQTERNRDIIRRSGLLLWQLLMAPKDQICPEIQKEVCLAISSGLNILYPGETEINNLLKLVLTEGERNSGLSQLRDVILTNLAEQLQNNRFGSDEDDHYRLNDELLHYILKIVVRESCILITKCQTVSKDDFQKLLSTVPAASSCLRYLMAVQNHLLSNTILIKPDENDDSDSSLQGETLKVQELKVSILALATQILTGCDEVLEMLQQVTTALINSDIADREQRLKGLEQVTKATMLGHLLPVLLTSLMHPNLQTLIMADALMPQLVQLVLYTSQTALLLKTQCPVFAEVGCSPCGAPDQKCRLFPDERMLEEKEEPGFLTGLKIPAPWAAGKTVETVHPVRDNYKFKETVHIPGARCLYLRFDSRCSSQYDYDKLVIYAGPNTNSRKVAEYGGNTLGYGSRSVLGTGWPKDLVKCISPPSLNFKVEGDTVTFSFEMRSGREHNTPDKAMWGFACTVRAQESSEDVSGGLPFLVDLALGLSVLACSMLRILYNGPEITKEEEACQELLRSKLLQRCQWQVEANGVISPALTPSPSPLPLTIEEDREFTYPSDVLVPPVGNYFDLPRIRLPPGIMIKLREISGRARPQFRPSIKEVIQPDVMEEMVVSCVIKHLNLVDALQSLINFQYQEEHAEEYDLLCKIMGETFKKLNAMERQLQSVAELEQKWQSEVDDAMQGKLENNMPFFYDYHFNENKMKELELLCSMKEVSFDGNDLENMVLSLREKFLQEVNSLIQKPSHPLAKTKTLVKSLMNRAELLLHVTIAAQSGLTRSISGTPAETPACKSASETKVISHAVRQPVFLRSMSAPSDLEMIGNEDLEFTRANQRRRHVTSHRSSSFTLLQSLAIEDSRDKPTYSVLLGQLFAFIGTNPDQAVSSSSFLLAAQTRWRRGNTRKQALVHMRELLTAAVRVGGVTHLVGPVTMVLQGGPRIEELTCGGMVEQVQEAFGETMTSVVSLCARYPIACANSIGLLCTIPYTRSEEKCLVRSGLVQLMDRLCSLSNQTESSSSEKQTKKQKVATMAWAAFQVLANRCVEWEKEEGGSTEAVHSGLARQVSSLLTNHLARATECCGNQAAGNDALQDVLSLLNDLSRSHIGKAILSQPACVSKLLSLLLDQRPSPKLVLIILQLCRAALPLMSVEDCGNVELPPWSYSVPSLNSEQEDPSDPASKIASLLLAKLADYVVPGCQTVLSPTASEPDTTLTKTSPKNSLKGDKDPGEESEAVDGKLSIFIHKREDQSSHEVLQPLLSSSEGRPFRLGTGANMEKVVKMDRDMTKGGCCEVITEEAAAALRKATKWAQSGLIVSIGPPVESINPETVSGLSTGDKKKTAQTSICRERNSELARTDPVRPFISGHVANSMAAEVIALLHSLLMAPESNAAQIWTTTAEKVLSRALMYIPQLGKYAESILENGSSSGRKLAKLQRIARQAVAALCALGGFKETIKIGSEVQVLGRGISGSIGVVASINEQEGIATVRFPPIDCRKTSQASDTLTIPLSRLCVPRSEALPLHKLSITEKVVQAVQSMLLPQEGSLSIHTSLPATGDGSAPVMAVVRLLAEIRTRACLVMAQLLEDSLFCEEFIQQCPAAVEVLNLVAQECSAGERLAVVEVQCERLRMLYRDCARPPPPPLQADRRQPKEITWSPSRVFPPVRACMFSSHLTSVTFLADPSAGGGLPRGTFIYATSPLPVQAPSFYWEIEIVSYGDTDDDTGPIVSFGFTTEAEKRDGAWTNPVGTCLFHNNGRAVHYNGSSLLQWKSVRLDVTLSPGDVAGIGWERTEGTPPPPGQPAKGRVYFTYCGQRLSPYLEDVSGGMWPVVHIQKKNTKTRANFGSRPFAYAEGQAHRNAADLCTDLAEEISANFEALPFAMASDSDNDAGTSIASDPGTHGPPCRIAAVATAQQQYDSDTSCHYKVELSYENFITSGPDPHPPPIADDESDDDDDDDIPQEDHYALLVKAWETKVFPTIRRRFRNEAERKSGLDQIKGALQLGMVDIARQTVEFLYEENGGIPRDLYLPTIEDIKDEANKFTIDKVRKGLTVVTRSPDSNNVASSAVGTALPKFAIRGMLKTFGLHGVVLDVDSVNELVQVETYLRSEGVLVRYWYPIDMLERPPAGYRRTATNGLVTLDNTNLQIHRELLRCEAALARLYCRMALLNIFAPKLPHLFTRLFHIPAIRDITLEHLQLLSNQLLAPPLPDGTISSSSILLAQSLQHCIHSQNCSATDLFYQGNSQTVREWLNVAITRTLHQGEESLLELTKQICSFLQTAPEQFPSEEFPISESKVNMDVNFPGAAFVVVSCKESQSGFRKDSSLYKAPWARVLVYGLGHKVKRNGQLNLIEAACYPRDASPANTGLAPPPTADQYPSVVLSTDRVHIKLGVSPPPGAVLVLHSLPLEFPLAMAFAEQLLSWKSEDSEGKSEDEPDTIPTSVLLQVVELLGNFLWTTDMAACVKELVFHLLAELLRTVHTLEQRRHPAGLSSSIALQLNPCLAMLMALQSELHKLYDEETQNWVSGGACGGSGGAAAGDQGRFSTYFHALMEGCLAVAEVTLPTNMSVTASGVTSATAPNLSDSSSSSSSSPGQTPQSPSLLSKRKKVKMKREKASSSGKRQSSRTVDSDPTVLSIGGSKPEDMLWFHRALTLLIILRHLTRKDPQGLGVTSDAIADACQALVGPTAHSRLLVISGIPTHLDEGVVRGAIRKACNAHGGVFKDEIYIPLQEEDTKKPKDKAEGGDGKVEPEKTLAFPGTDSMEVSTSSSLTPAMSISASASTSQASICSSQGISQTVSDLSVDPLPAGLELPIPPGLLEPHAVSSQESLDISLCSTGSLGSLGSLGEPLDNAETASVSDMGSMYTVTSLDNQPLAARPIKGFAVVEIRSRAKIEKIRASLFNNNDLIGLSSLDGEDELMEMSTEEILTVSVVNQSLFDTQGSPGLEDYFNDKSIKGEKLVPGAREVLTEIFKSCAHSEQTLSLTPAKPIRVSDIYLSKEQINSQTPGNLLHLFFTNVRPPKKVLEDQLTQILRKYGVPKPKFDKSKYSKAGKEQHPVKVVSTKRPITKPPAKDKAVLNSVSRTALSEKKPTVKPKSPEKSKPDEKDPEKSPTKKQEVPEEKYLTLEGFHKFVIDRARQDIRSVWRAILSCGYDLHFERCACIDVRHAQKASRKWTLEMDVALVQYINQLCRHLAITPARLHPHEVYLDPADAADPRVACLLNVPIESLRLRFALLQSLNTTLETFFLPLVELRQTPMYTHSIAALLKEAKGLIFYDTKVTVMNRVLNATVQRTADHAAPEITLDPLEIVGGEIRASENSYFCQAARQLASVPSSQLCVKLASGGDPTYAFNIRFTGEEVHGTSGSFRHFLWQVCKELQSSSLSLLLLCPSSAVNKNKGKYILTPSPITYGEEQLLHFLGQLLGIAIRADVPLPLDLLPSFWKTLVGEPLDPEQDLQEADILTYNYVKKFESINDETELEALCAEIASQHLATESPDSPNKPCCRFTYLTMTGEEVELCSRGRHILVAWENKDIYAAAIRSLRLRELQNVECVTAVRAGLGSIIPLQLLTMLSPLEMELRTCGLPYINLEFLKAHTMYQVGLMETDQHIEFFWGALEMFTQEELCKFIKFACNQERIPFTCPCKDGGPDTAHVPPYPMKIAPPDGTAGSPDSRYIRVETCMFMIKLPQYSSLEIMLEKLRCAIHYREDPLSG.

The chain crosses the membrane as a helical span at residues 282-302 (TCIIRCILVVFQVVFKFFFSP). The segment covering 1494-1510 (PTASEPDTTLTKTSPKN) has biased composition (polar residues). 2 disordered regions span residues 1494–1524 (PTASEPDTTLTKTSPKNSLKGDKDPGEESEA) and 1616–1637 (PETVSGLSTGDKKKTAQTSICR). Thr2080 is modified (phosphothreonine). 4 disordered regions span residues 2219–2245 (FITSGPDPHPPPIADDESDDDDDDDIP), 2859–2919 (TSAT…PTVL), 3017–3053 (EDTKKPKDKAEGGDGKVEPEKTLAFPGTDSMEVSTSS), and 3327–3403 (FDKS…QEVP). Over residues 2232–2245 (ADDESDDDDDDDIP) the composition is skewed to acidic residues. A compositionally biased stretch (low complexity) spans 2866–2887 (LSDSSSSSSSSPGQTPQSPSLL). Positions 2888–2897 (SKRKKVKMKR) are enriched in basic residues. Basic and acidic residues-rich tracts occupy residues 3017–3037 (EDTKKPKDKAEGGDGKVEPEK), 3327–3341 (FDKSKYSKAGKEQHP), and 3370–3403 (LSEKKPTVKPKSPEKSKPDEKDPEKSPTKKQEVP). Residues 3627–3996 (SGGDPTYAFN…IHYREDPLSG (370 aa)) enclose the HECT domain. Cys3964 acts as the Glycyl thioester intermediate in catalysis.

It is found in the membrane. It catalyses the reaction S-ubiquitinyl-[E2 ubiquitin-conjugating enzyme]-L-cysteine + [acceptor protein]-L-lysine = [E2 ubiquitin-conjugating enzyme]-L-cysteine + N(6)-ubiquitinyl-[acceptor protein]-L-lysine.. It functions in the pathway protein modification; protein ubiquitination. In terms of biological role, E3 ubiquitin-protein ligase which accepts ubiquitin from an E2 ubiquitin-conjugating enzyme in the form of a thioester and then directly transfers the ubiquitin to targeted substrates. The protein is Probable E3 ubiquitin-protein ligase HECTD4 (HECTD4) of Homo sapiens (Human).